The following is a 149-amino-acid chain: Putative pre-16S rRNA nuclease (149 aa).

The protein belongs to the YqgF nuclease family.

The protein localises to the cytoplasm. Could be a nuclease involved in processing of the 5'-end of pre-16S rRNA. This chain is Putative pre-16S rRNA nuclease, found in Burkholderia multivorans (strain ATCC 17616 / 249).